Consider the following 87-residue polypeptide: Small ribosomal subunit protein bS20 (87 aa).

A disordered region spans residues 1 to 29 (MANTAQARKRARQAVKQNAHNSSQRSTLR). The span at 20-29 (HNSSQRSTLR) shows a compositional bias: polar residues.

It belongs to the bacterial ribosomal protein bS20 family.

Functionally, binds directly to 16S ribosomal RNA. This chain is Small ribosomal subunit protein bS20, found in Janthinobacterium sp. (strain Marseille) (Minibacterium massiliensis).